The sequence spans 50 residues: Large ribosomal subunit protein eL39 (50 aa).

This sequence belongs to the eukaryotic ribosomal protein eL39 family.

This is Large ribosomal subunit protein eL39 from Methanosphaerula palustris (strain ATCC BAA-1556 / DSM 19958 / E1-9c).